The sequence spans 508 residues: Cytochrome P450 monooxygenase aflV (508 aa).

A helical membrane pass occupies residues 18 to 38; it reads LTWWFLAVGGAWIVSKIIKIL. N-linked (GlcNAc...) asparagine glycans are attached at residues N192, N209, N302, and N408. C453 is a binding site for heme.

This sequence belongs to the cytochrome P450 family. Heme is required as a cofactor.

The protein localises to the membrane. It participates in mycotoxin biosynthesis; aflatoxin biosynthesis. Functionally, cytochrome P450 monooxygenase; part of the gene cluster that mediates the biosynthesis of aflatoxins, a group of polyketide-derived furanocoumarins, and part of the most toxic and carcinogenic compounds among the known mycotoxins. The four major aflatoxins produced by A.parasiticus are aflatoxin B1 (AFB1), aflatoxin B2 (AFB2), aflatoxin G1 (AFG1) and aflatoxin G2 (AFG2). The role of the cytochrome P450 monooxygenase aflV in aflatoxin biosynthesis has still to be characterized. The biosynthesis of aflatoxins begins with the norsolorinic acid synthase aflC that combines a hexanoyl starter unit produced by the fatty acid synthase aflA/aflB and 7 malonyl-CoA extender units to synthesize the precursor NOR. The second step is the conversion of NOR to averantin and requires the norsolorinic acid ketoreductase aflD, which catalyzes the dehydration of norsolorinic acid to form (1'S)-averantin. The norsolorinic acid reductases aflE and aflF may also play a role in the conversion of NOR to AVN. The cytochrome P450 monooxygenase aflG then catalyzes the hydroxylation of AVN to 5'hydroxyaverantin (HAVN). The next step is performed by the 5'-hydroxyaverantin dehydrogenase aflH that transforms HAVN to 5'-oxoaverantin (OAVN) which is further converted to averufin (AVF) by aflK that plays a dual role in the pathway, as a 5'-oxoaverantin cyclase that mediates conversion of 5'-oxoaverantin, as well as a versicolorin B synthase in a later step in the pathway. The averufin oxidase aflI catalyzes the conversion of AVF to versiconal hemiacetal acetate (VHA). VHA is then the substrate for the versiconal hemiacetal acetate esterase aflJ to yield versiconal (VAL). Versicolorin B synthase aflK then converts VAL to versicolorin B (VERB) by closing the bisfuran ring of aflatoxin which is required for DNA-binding, thus giving to aflatoxin its activity as a mutagen. Then, the activity of the versicolorin B desaturase aflL leads to versicolorin A (VERA). A branch point starts from VERB since it can also be converted to dihydrodemethylsterigmatocystin (DMDHST), probably also by aflL, VERA being a precursor for aflatoxins B1 and G1, and DMDHST for aflatoxins B2 and G2. Next, the versicolorin reductase aflM and the cytochrome P450 monooxygenase aflN are involved in conversion of VERA to demethylsterigmatocystin (DMST). AflX and aflY seem also involved in this step, through probable aflX-mediated epoxide ring-opening step following versicolorin A oxidation and aflY-mediated Baeyer-Villiger oxidation required for the formation of the xanthone ring. The methyltransferase aflO then leads to the modification of DMST to sterigmatocystin (ST), and of DMDHST to dihydrosterigmatocystin (DHST). Both ST and DHST are then substrates of the O-methyltransferase aflP to yield O-methylsterigmatocystin (OMST) and dihydro-O-methylsterigmatocystin (DHOMST), respectively. Finally OMST is converted to aflatoxins B1 and G1, and DHOMST to aflatoxins B2 and G2, via the action of several enzymes including O-methylsterigmatocystin oxidoreductase aflQ, the cytochrome P450 monooxygenase aflU, but also the NADH-dependent flavin oxidoreductase nadA which is specifically required for the synthesis of AFG1. This chain is Cytochrome P450 monooxygenase aflV, found in Aspergillus parasiticus (strain ATCC 56775 / NRRL 5862 / SRRC 143 / SU-1).